Here is a 101-residue protein sequence, read N- to C-terminus: MAKTSMKAREAKRAQLVAKFAEKRAALKAIIASPASSDEDRWDAVLKLQALPRDSSASRQRNRCNQTGRPHGFLRKFGLSRIKLREATMRGEVPGLRKASW.

Belongs to the universal ribosomal protein uS14 family. As to quaternary structure, part of the 30S ribosomal subunit. Contacts proteins S3 and S10.

In terms of biological role, binds 16S rRNA, required for the assembly of 30S particles and may also be responsible for determining the conformation of the 16S rRNA at the A site. This chain is Small ribosomal subunit protein uS14, found in Shewanella sp. (strain ANA-3).